The sequence spans 440 residues: Diaminopimelate decarboxylase (440 aa).

The residue at position 61 (lysine 61) is an N6-(pyridoxal phosphate)lysine. Residues glycine 234 and 275–278 (EPGR) contribute to the pyridoxal 5'-phosphate site. Substrate-binding residues include arginine 278, arginine 314, and tyrosine 318. Cysteine 348 serves as the catalytic Proton donor. Residues glutamate 349 and tyrosine 384 each coordinate substrate. Residue tyrosine 384 participates in pyridoxal 5'-phosphate binding. The segment covering 421–431 (LAPELEPGPAL) has biased composition (low complexity). Positions 421–440 (LAPELEPGPALSPRPSRDPR) are disordered.

It belongs to the Orn/Lys/Arg decarboxylase class-II family. LysA subfamily. Homodimer. The cofactor is pyridoxal 5'-phosphate.

It catalyses the reaction meso-2,6-diaminopimelate + H(+) = L-lysine + CO2. It functions in the pathway amino-acid biosynthesis; L-lysine biosynthesis via DAP pathway; L-lysine from DL-2,6-diaminopimelate: step 1/1. In terms of biological role, specifically catalyzes the decarboxylation of meso-diaminopimelate (meso-DAP) to L-lysine. The chain is Diaminopimelate decarboxylase from Streptomyces coelicolor (strain ATCC BAA-471 / A3(2) / M145).